Here is a 714-residue protein sequence, read N- to C-terminus: Fatty acid oxidation complex subunit alpha (714 aa).

The enoyl-CoA hydratase stretch occupies residues 1 to 190 (MEMASAFTLN…KLGLVDDVVP (190 aa)). The tract at residues 306 to 714 (APLNSVGILG…FWKTTATDLQ (409 aa)) is 3-hydroxyacyl-CoA dehydrogenase.

This sequence in the N-terminal section; belongs to the enoyl-CoA hydratase/isomerase family. The protein in the central section; belongs to the 3-hydroxyacyl-CoA dehydrogenase family. In terms of assembly, heterotetramer of two alpha chains (FadJ) and two beta chains (FadI).

It localises to the cytoplasm. It catalyses the reaction a (3S)-3-hydroxyacyl-CoA = a (2E)-enoyl-CoA + H2O. The enzyme catalyses a 4-saturated-(3S)-3-hydroxyacyl-CoA = a (3E)-enoyl-CoA + H2O. It carries out the reaction a (3S)-3-hydroxyacyl-CoA + NAD(+) = a 3-oxoacyl-CoA + NADH + H(+). The catalysed reaction is (3S)-3-hydroxybutanoyl-CoA = (3R)-3-hydroxybutanoyl-CoA. It participates in lipid metabolism; fatty acid beta-oxidation. Functionally, catalyzes the formation of a hydroxyacyl-CoA by addition of water on enoyl-CoA. Also exhibits 3-hydroxyacyl-CoA epimerase and 3-hydroxyacyl-CoA dehydrogenase activities. In Escherichia coli O6:H1 (strain CFT073 / ATCC 700928 / UPEC), this protein is Fatty acid oxidation complex subunit alpha.